The sequence spans 299 residues: Ornithine carbamoyltransferase (299 aa).

Carbamoyl phosphate contacts are provided by residues 52 to 55 (STRT), Q79, R103, and 130 to 133 (HPCQ). Residues N161, D218, and 222-223 (SM) contribute to the L-ornithine site. Residues 258 to 259 (CL) and R286 each bind carbamoyl phosphate.

This sequence belongs to the aspartate/ornithine carbamoyltransferase superfamily. OTCase family.

Its subcellular location is the cytoplasm. It catalyses the reaction carbamoyl phosphate + L-ornithine = L-citrulline + phosphate + H(+). Its pathway is amino-acid biosynthesis; L-arginine biosynthesis; L-arginine from L-ornithine and carbamoyl phosphate: step 1/3. Reversibly catalyzes the transfer of the carbamoyl group from carbamoyl phosphate (CP) to the N(epsilon) atom of ornithine (ORN) to produce L-citrulline. The polypeptide is Ornithine carbamoyltransferase (Ruthia magnifica subsp. Calyptogena magnifica).